The chain runs to 476 residues: Aspartyl/glutamyl-tRNA(Asn/Gln) amidotransferase subunit B (476 aa).

This sequence belongs to the GatB/GatE family. GatB subfamily. As to quaternary structure, heterotrimer of A, B and C subunits.

The enzyme catalyses L-glutamyl-tRNA(Gln) + L-glutamine + ATP + H2O = L-glutaminyl-tRNA(Gln) + L-glutamate + ADP + phosphate + H(+). It carries out the reaction L-aspartyl-tRNA(Asn) + L-glutamine + ATP + H2O = L-asparaginyl-tRNA(Asn) + L-glutamate + ADP + phosphate + 2 H(+). In terms of biological role, allows the formation of correctly charged Asn-tRNA(Asn) or Gln-tRNA(Gln) through the transamidation of misacylated Asp-tRNA(Asn) or Glu-tRNA(Gln) in organisms which lack either or both of asparaginyl-tRNA or glutaminyl-tRNA synthetases. The reaction takes place in the presence of glutamine and ATP through an activated phospho-Asp-tRNA(Asn) or phospho-Glu-tRNA(Gln). The polypeptide is Aspartyl/glutamyl-tRNA(Asn/Gln) amidotransferase subunit B (Neisseria gonorrhoeae (strain ATCC 700825 / FA 1090)).